The primary structure comprises 128 residues: RutC family protein BU371 (128 aa).

The protein belongs to the RutC family.

In Buchnera aphidicola subsp. Acyrthosiphon pisum (strain APS) (Acyrthosiphon pisum symbiotic bacterium), this protein is RutC family protein BU371.